A 293-amino-acid chain; its full sequence is Ribosomal RNA small subunit methyltransferase A (293 aa).

S-adenosyl-L-methionine-binding residues include Asn38, Val40, Gly65, Glu86, Asp116, and Asn135.

The protein belongs to the class I-like SAM-binding methyltransferase superfamily. rRNA adenine N(6)-methyltransferase family. RsmA subfamily.

Its subcellular location is the cytoplasm. It catalyses the reaction adenosine(1518)/adenosine(1519) in 16S rRNA + 4 S-adenosyl-L-methionine = N(6)-dimethyladenosine(1518)/N(6)-dimethyladenosine(1519) in 16S rRNA + 4 S-adenosyl-L-homocysteine + 4 H(+). Functionally, specifically dimethylates two adjacent adenosines (A1518 and A1519) in the loop of a conserved hairpin near the 3'-end of 16S rRNA in the 30S particle. May play a critical role in biogenesis of 30S subunits. The polypeptide is Ribosomal RNA small subunit methyltransferase A (Nocardia farcinica (strain IFM 10152)).